The chain runs to 221 residues: tRNA (guanine-N(7)-)-methyltransferase (221 aa).

E46, D71, and D120 together coordinate S-adenosyl-L-methionine. Residue D120 is part of the active site. A substrate-binding site is contributed by D156.

The protein belongs to the class I-like SAM-binding methyltransferase superfamily. TrmB family.

The catalysed reaction is guanosine(46) in tRNA + S-adenosyl-L-methionine = N(7)-methylguanosine(46) in tRNA + S-adenosyl-L-homocysteine. It participates in tRNA modification; N(7)-methylguanine-tRNA biosynthesis. Its function is as follows. Catalyzes the formation of N(7)-methylguanine at position 46 (m7G46) in tRNA. In Cytophaga hutchinsonii (strain ATCC 33406 / DSM 1761 / CIP 103989 / NBRC 15051 / NCIMB 9469 / D465), this protein is tRNA (guanine-N(7)-)-methyltransferase.